A 122-amino-acid polypeptide reads, in one-letter code: Small ribosomal subunit protein uS13 (122 aa).

The tract at residues 99–122 (RGQRTHTNARTRKGPAKAIAGKKK) is disordered.

The protein belongs to the universal ribosomal protein uS13 family. As to quaternary structure, part of the 30S ribosomal subunit. Forms a loose heterodimer with protein S19. Forms two bridges to the 50S subunit in the 70S ribosome.

In terms of biological role, located at the top of the head of the 30S subunit, it contacts several helices of the 16S rRNA. In the 70S ribosome it contacts the 23S rRNA (bridge B1a) and protein L5 of the 50S subunit (bridge B1b), connecting the 2 subunits; these bridges are implicated in subunit movement. Contacts the tRNAs in the A and P-sites. This Bradyrhizobium diazoefficiens (strain JCM 10833 / BCRC 13528 / IAM 13628 / NBRC 14792 / USDA 110) protein is Small ribosomal subunit protein uS13.